Consider the following 751-residue polypeptide: Serine/threonine-protein kinase-like protein CCR4 (751 aa).

The N-terminal stretch at 1-31 (MALTISISCFSSYFVSLLLLVLSSFSFVCFS) is a signal peptide. The Extracellular segment spans residues 32–366 (LSTVSISHIS…NKTWSRRNIA (335 aa)). N42, N51, N98, N243, N254, N283, and N357 each carry an N-linked (GlcNAc...) asparagine glycan. The chain crosses the membrane as a helical span at residues 367 to 387 (FLVVGCVGTFSLLLVISFLIF). The Cytoplasmic segment spans residues 388-751 (KSHCRCRVHD…TETVSRSNTY (364 aa)). In terms of domain architecture, Protein kinase spans 443–733 (FSVRFHLGIG…EVVSKLESAL (291 aa)). Residues 449 to 457 (LGIGSFGSV) and K471 each bind ATP. The active-site Proton acceptor is D579.

This sequence belongs to the protein kinase superfamily. Ser/Thr protein kinase family. As to quaternary structure, homodimer. In terms of tissue distribution, expressed in roots, leaves, especially in trichomes, shoot apical meristems (SAM), and, to a lower extent, in floral buds.

The protein resides in the membrane. The enzyme catalyses L-seryl-[protein] + ATP = O-phospho-L-seryl-[protein] + ADP + H(+). It catalyses the reaction L-threonyl-[protein] + ATP = O-phospho-L-threonyl-[protein] + ADP + H(+). This chain is Serine/threonine-protein kinase-like protein CCR4 (CCR4), found in Arabidopsis thaliana (Mouse-ear cress).